We begin with the raw amino-acid sequence, 962 residues long: Ubiquitin carboxyl-terminal hydrolase 4 (962 aa).

The DUSP domain occupies 11–122 (PDVETQKTEL…GQQPIVRKVV (112 aa)). Residues 27–216 (TLQRGAQWYL…LYQGQVLVIE (190 aa)) are necessary for interaction with SART3. The Nuclear export signal signature appears at 133 to 141 (VEVYLLELK). One can recognise a Ubiquitin-like 1 domain in the interval 142 to 226 (LCENSDPTNV…PQNEDGTWPR (85 aa)). Residues 220 to 249 (EDGTWPRQSLQSKSSTAPSRNFTTSSKPSA) are disordered. Over residues 225–249 (PRQSLQSKSSTAPSRNFTTSSKPSA) the composition is skewed to polar residues. Positions 229-295 (LQSKSSTAPS…SYNCQEPPSP (67 aa)) are required for USP4 activation by providing conformational flexibility between the DUSP and catalytic domains. One can recognise a USP domain in the interval 302–922 (CGLGNLGNTC…AAYVLFYQRR (621 aa)). Catalysis depends on Cys-311, which acts as the Nucleophile. The regulates ubiquitin dissociation stretch occupies residues 384–386 (PQF). Residues 405–407 (LHE) are necessary for interaction with RBL2. The residue at position 445 (Ser-445) is a Phosphoserine. Positions 459 to 463 (LVCPE) are necessary for interaction with RB1 and RBL2. Cys-461 and Cys-464 together coordinate Zn(2+). Positions 483-571 (LKKDRIMEVF…IFVYEVCNTS (89 aa)) constitute a Ubiquitin-like 2 domain. Positions 485–774 (KDRIMEVFLV…SQPQKKKKAA (290 aa)) are interacts with DUSP and ubiquitin-like 1 domains and is required for USP4 activation. Residues 638–699 (EFLSSPLEPG…SESAQKVKGQ (62 aa)) are disordered. Position 655 is a phosphoserine (Ser-655). Residues 657 to 666 (EGDEEEEMDH) are compositionally biased toward acidic residues. Ser-675 and Ser-680 each carry phosphoserine. The Nuclear localization signal signature appears at 766-771 (QPQKKK). 2 residues coordinate Zn(2+): Cys-798 and Cys-801. His-880 (proton acceptor) is an active-site residue. The segment covering 928–937 (STSSLGSFPG) has biased composition (low complexity). The interval 928-962 (STSSLGSFPGSDGGVKLSSSHQGMGDEEAYNMDTN) is disordered. Acidic residues predominate over residues 952–962 (GDEEAYNMDTN).

This sequence belongs to the peptidase C19 family. USP4 subfamily. Interacts with RB1 (both dephosphorylated and hypophosphorylated forms). Interacts with RBL1 and RBL2. Interacts with ADORA2A (via cytoplasmic C-terminus); the interaction is direct. Interacts with SART3; recruits USP4 to its substrate PRPF3. In terms of processing, phosphorylated at Ser-445 by PKB/AKT1 in response to EGF stimulus, promoting its ability deubiquitinate RHEB. Monoubiquitinated by TRIM21. Ubiquitination does not lead to its proteasomal degradation. Autodeubiquitinated. Expressed in brain, kidney, liver and spleen (at protein level).

It is found in the cytoplasm. Its subcellular location is the nucleus. The enzyme catalyses Thiol-dependent hydrolysis of ester, thioester, amide, peptide and isopeptide bonds formed by the C-terminal Gly of ubiquitin (a 76-residue protein attached to proteins as an intracellular targeting signal).. Its activity is regulated as follows. The completion of the deubiquitinase reaction is mediated by the DUSP and ubiquitin-like 1 domains which promotes the release of ubiquitin from the catalytic site enabling subsequent reactions to occur. Its function is as follows. Deubiquitinating enzyme that removes conjugated ubiquitin from target proteins. Deubiquitinates PDPK1. Deubiquitinates TRIM21. Deubiquitinates receptor ADORA2A which increases the amount of functional receptor at the cell surface. Deubiquitinates HAS2. Deubiquitinates RHEB in response to EGF signaling, promoting mTORC1 signaling. May regulate mRNA splicing through deubiquitination of the U4 spliceosomal protein PRPF3. This may prevent its recognition by the U5 component PRPF8 thereby destabilizing interactions within the U4/U6.U5 snRNP. May also play a role in the regulation of quality control in the ER. This chain is Ubiquitin carboxyl-terminal hydrolase 4 (Usp4), found in Mus musculus (Mouse).